A 313-amino-acid chain; its full sequence is Lactamase-like protein nscB (313 aa).

4 residues coordinate Zn(2+): histidine 97, histidine 99, aspartate 101, and histidine 102. Aspartate 101 acts as the Proton donor/acceptor in catalysis.

This sequence belongs to the metallo-beta-lactamase superfamily. Zn(2+) serves as cofactor.

It functions in the pathway secondary metabolite biosynthesis. Lactamase-like protein; part of the gene cluster that mediates the biosynthesis of neosartoricin B, a prenylated anthracenone that probably exhibits T-cell antiproliferative activity, suggestive of a physiological role as an immunosuppressive agent. The non-reducing polyketide synthase nscA probably synthesizes and cyclizes the decaketide backbone. The hydrolase nscB then mediates the product release through hydrolysis followed by spontaneous decarboxylation. The prenyltransferase nscD catalyzes the addition of the dimethylallyl group to the aromatic C5. The FAD-dependent monooxygenase nscC is then responsible for the stereospecific hydroxylation at C2. Neosartoricin B can be converted into two additional compounds neosartoricins C and D. Neosartoricin C is a spirocyclic compound that is cyclized through the attack of C3 hydroxyl on C14, followed by dehydration. On the other hand, neosartoricin D is a further cyclized compound in which attack of C2 on C14 in neosartoricin C results in the formation of the acetal-containing dioxabicyclo-octanone ring. Both of these compounds are novel and possibly represent related metabolites of the gene cluster. The polypeptide is Lactamase-like protein nscB (Arthroderma gypseum (strain ATCC MYA-4604 / CBS 118893) (Microsporum gypseum)).